The chain runs to 197 residues: Peptide deformylase (197 aa).

Residues Cys106 and His148 each contribute to the Fe cation site. The active site involves Glu149. His152 is a Fe cation binding site.

It belongs to the polypeptide deformylase family. It depends on Fe(2+) as a cofactor.

The enzyme catalyses N-terminal N-formyl-L-methionyl-[peptide] + H2O = N-terminal L-methionyl-[peptide] + formate. Functionally, removes the formyl group from the N-terminal Met of newly synthesized proteins. Requires at least a dipeptide for an efficient rate of reaction. N-terminal L-methionine is a prerequisite for activity but the enzyme has broad specificity at other positions. This is Peptide deformylase from Mycobacterium marinum (strain ATCC BAA-535 / M).